Reading from the N-terminus, the 269-residue chain is Undecaprenyl-diphosphatase (269 aa).

The next 8 helical transmembrane spans lie at 1-21 (MSIF…FLPI), 39-59 (LPIL…CTVF), 86-106 (LMMI…GLLL), 112-132 (TIDI…LIAS), 144-164 (VTLL…IPGI), 184-204 (AGEF…ILEI), 210-230 (LLAG…FVVG), and 249-269 (FAFY…GFAG).

The protein belongs to the UppP family.

The protein localises to the cell inner membrane. It carries out the reaction di-trans,octa-cis-undecaprenyl diphosphate + H2O = di-trans,octa-cis-undecaprenyl phosphate + phosphate + H(+). In terms of biological role, catalyzes the dephosphorylation of undecaprenyl diphosphate (UPP). Confers resistance to bacitracin. In Treponema denticola (strain ATCC 35405 / DSM 14222 / CIP 103919 / JCM 8153 / KCTC 15104), this protein is Undecaprenyl-diphosphatase.